An 85-amino-acid chain; its full sequence is Putative defensin-like protein 79 (85 aa).

A signal peptide spans 1–31; the sequence is MKSEKSADAYGTYFLLISTIFLLFIARQASS. Intrachain disulfides connect cysteine 37–cysteine 69, cysteine 44–cysteine 60, cysteine 47–cysteine 67, and cysteine 51–cysteine 68.

The protein belongs to the DEFL family.

It localises to the secreted. This chain is Putative defensin-like protein 79, found in Arabidopsis thaliana (Mouse-ear cress).